We begin with the raw amino-acid sequence, 361 residues long: Peptide chain release factor 1 (361 aa).

Gln-235 is modified (N5-methylglutamine).

Belongs to the prokaryotic/mitochondrial release factor family. Methylated by PrmC. Methylation increases the termination efficiency of RF1.

The protein resides in the cytoplasm. In terms of biological role, peptide chain release factor 1 directs the termination of translation in response to the peptide chain termination codons UAG and UAA. This Buchnera aphidicola subsp. Schizaphis graminum (strain Sg) protein is Peptide chain release factor 1.